The sequence spans 463 residues: RuvB-like 2 (463 aa).

N-acetylalanine is present on Ala-2. Lys-9 is covalently cross-linked (Glycyl lysine isopeptide (Lys-Gly) (interchain with G-Cter in SUMO2)). Residue 77–84 (GQPGTGKT) coordinates ATP. Phosphoserine is present on Ser-437. Glycyl lysine isopeptide (Lys-Gly) (interchain with G-Cter in SUMO2) cross-links involve residues Lys-444 and Lys-456.

This sequence belongs to the RuvB family. In terms of assembly, forms homohexameric rings. Can form a dodecamer with RUVBL1 made of two stacked hexameric rings; however, even though RUVBL1 and RUVBL2 are present in equimolar ratio, the oligomeric status of each hexamer is not known. Oligomerization may regulate binding to nucleic acids and conversely, binding to nucleic acids may affect the dodecameric assembly. Interaction of the complex with DHX34 results in conformational changes of the N-terminus of the RUVBL2 subunits, resulting in loss of nucleotide binding ability and ATP hydrolysis of the complex. Interacts with the transcriptional activation domain of MYC. Interacts with ATF2. Component of the RNA polymerase II holoenzyme complex. May also act to bridge the LEF1/TCF1-CTNNB1 complex and TBP. Component of the NuA4 histone acetyltransferase complex which contains the catalytic subunit KAT5/TIP60 and the subunits EP400, TRRAP/PAF400, BRD8/SMAP, EPC1, DMAP1/DNMAP1, RUVBL1/TIP49, RUVBL2, ING3, actin, ACTL6A/BAF53A, MORF4L1/MRG15, MORF4L2/MRGX, MRGBP, YEATS4/GAS41, VPS72/YL1 and MEAF6. The NuA4 complex interacts with MYC and the adenovirus E1A protein. RUVBL2 interacts with EP400. Component of a NuA4-related complex which contains EP400, TRRAP/PAF400, SRCAP, BRD8/SMAP, EPC1, DMAP1/DNMAP1, RUVBL1/TIP49, RUVBL2, actin, ACTL6A/BAF53A, VPS72 and YEATS4/GAS41. Interacts with NPAT. Component of the chromatin-remodeling INO80 complex; specifically part of a complex module associated with the helicase ATP-binding and the helicase C-terminal domain of INO80. Component of some MLL1/MLL complex, at least composed of the core components KMT2A/MLL1, ASH2L, HCFC1/HCF1, WDR5 and RBBP5, as well as the facultative components BACC1, CHD8, E2F6, HSP70, INO80C, KANSL1, LAS1L, MAX, MCRS1, MGA, MYST1/MOF, PELP1, PHF20, PRP31, RING2, RUVB1/TIP49A, RUVB2/TIP49B, SENP3, TAF1, TAF4, TAF6, TAF7, TAF9 and TEX10. Interacts with IGHMBP2. Interacts with TELO2. Interacts with HINT1. Component of a SWR1-like complex. Component of the R2TP complex composed at least of RUVBL1, RUVBL2, RPAP3 and PIHD1. Component of the PAQosome complex which is responsible for the biogenesis of several protein complexes and which consists of R2TP complex members RUVBL1, RUVBL2, RPAP3 and PIH1D1, URI complex members PFDN2, PFDN6, PDRG1, UXT and URI1 as well as ASDURF, POLR2E and DNAAF10/WDR92. Interacts with ITFG1. Interacts with ZMYND10. Interacts with WAC; WAC positively regulates MTOR activity by promoting the assembly of the TTT complex composed of TELO2, TTI1 and TTI2 and the RUVBL complex composed of RUVBL1 and RUVBL2 into the TTT-RUVBL complex which leads to the dimerization of the mTORC1 complex and its subsequent activation. Forms a complex with APPL1 and APPL2. Interacts with ZNHIT2 (via HIT-type zinc finger) in the presence of ATP or ADP; shows a stronger interaction in the presence of ADP. The RUVBL1/RUVBL2 complex interacts with ZNHIT1 (via HIT-type zinc finger), ZNHIT3 (via HIT-type zinc finger), ZNHIT6 (via HIT-type zinc finger) and DDX59/ZNHIT5 (via HIT-type zinc finger) in the presence of ADP. Interacts with NOPCHAP1; the interaction is direct and disrupted upon ATP binding. Interacts with SMG1.

It is found in the nucleus matrix. The protein resides in the nucleus. It localises to the nucleoplasm. The protein localises to the cytoplasm. Its subcellular location is the membrane. It is found in the dynein axonemal particle. The enzyme catalyses ATP + H2O = ADP + phosphate + H(+). Possesses single-stranded DNA-stimulated ATPase and ATP-dependent DNA helicase (5' to 3') activity; hexamerization is thought to be critical for ATP hydrolysis and adjacent subunits in the ring-like structure contribute to the ATPase activity. Component of the NuA4 histone acetyltransferase complex which is involved in transcriptional activation of select genes principally by acetylation of nucleosomal histones H4 and H2A. This modification may both alter nucleosome-DNA interactions and promote interaction of the modified histones with other proteins which positively regulate transcription. This complex may be required for the activation of transcriptional programs associated with oncogene and proto-oncogene mediated growth induction, tumor suppressor mediated growth arrest and replicative senescence, apoptosis, and DNA repair. The NuA4 complex ATPase and helicase activities seem to be, at least in part, contributed by the association of RUVBL1 and RUVBL2 with EP400. NuA4 may also play a direct role in DNA repair when recruited to sites of DNA damage. Component of a SWR1-like complex that specifically mediates the removal of histone H2A.Z/H2AZ1 from the nucleosome. Proposed core component of the chromatin remodeling INO80 complex which exhibits DNA- and nucleosome-activated ATPase activity and catalyzes ATP-dependent nucleosome sliding. Plays an essential role in oncogenic transformation by MYC and also modulates transcriptional activation by the LEF1/TCF1-CTNNB1 complex. May also inhibit the transcriptional activity of ATF2. Involved in the endoplasmic reticulum (ER)-associated degradation (ERAD) pathway where it negatively regulates expression of ER stress response genes. May play a role in regulating the composition of the U5 snRNP complex. In Bos taurus (Bovine), this protein is RuvB-like 2 (RUVBL2).